A 364-amino-acid chain; its full sequence is 3-isopropylmalate dehydrogenase (364 aa).

79-90 provides a ligand contact to NAD(+); sequence GPKWGTGSVRPE. Residues Arg-97, Arg-107, Arg-136, and Asp-225 each coordinate substrate. Residues Asp-225, Asp-250, and Asp-254 each coordinate Mg(2+). 289 to 300 contacts NAD(+); sequence GSAPDLPKNKVN.

It belongs to the isocitrate and isopropylmalate dehydrogenases family. As to quaternary structure, homodimer. Requires Mg(2+) as cofactor. It depends on Mn(2+) as a cofactor.

It is found in the cytoplasm. The enzyme catalyses (2R,3S)-3-isopropylmalate + NAD(+) = 4-methyl-2-oxopentanoate + CO2 + NADH. It participates in amino-acid biosynthesis; L-leucine biosynthesis; L-leucine from 3-methyl-2-oxobutanoate: step 3/4. Its function is as follows. Catalyzes the oxidation of 3-carboxy-2-hydroxy-4-methylpentanoate (3-isopropylmalate) to 3-carboxy-4-methyl-2-oxopentanoate. The product decarboxylates to 4-methyl-2 oxopentanoate. In Saccharomyces cerevisiae (strain ATCC 204508 / S288c) (Baker's yeast), this protein is 3-isopropylmalate dehydrogenase (LEU2).